The sequence spans 61 residues: Conotoxin Vn5.3 (61 aa).

A signal peptide spans 1 to 19 (MHCLPVFVILLLLIASAPG). Positions 20–50 (VDVQPKTKNFMTRASLRDFAKKTPKRLSKLR) are excised as a propeptide.

This sequence belongs to the conotoxin T superfamily. Contains 2 disulfide bonds that can be either 'C1-C3, C2-C4' or 'C1-C4, C2-C3', since these disulfide connectivities have been observed for conotoxins with cysteine framework V (for examples, see AC P0DQQ7 and AC P81755). Expressed by the venom duct.

It is found in the secreted. The sequence is that of Conotoxin Vn5.3 from Conus ventricosus (Mediterranean cone).